The primary structure comprises 188 residues: Elongation factor P (188 aa).

Position 34 is an N6-(3,6-diaminohexanoyl)-5-hydroxylysine (K34).

This sequence belongs to the elongation factor P family. In terms of processing, may be beta-lysylated on the epsilon-amino group of Lys-34 by the combined action of EpmA and EpmB, and then hydroxylated on the C5 position of the same residue by EpmC (if this protein is present). Lysylation is critical for the stimulatory effect of EF-P on peptide-bond formation. The lysylation moiety may extend toward the peptidyltransferase center and stabilize the terminal 3-CCA end of the tRNA. Hydroxylation of the C5 position on Lys-34 may allow additional potential stabilizing hydrogen-bond interactions with the P-tRNA.

It is found in the cytoplasm. Its pathway is protein biosynthesis; polypeptide chain elongation. Involved in peptide bond synthesis. Alleviates ribosome stalling that occurs when 3 or more consecutive Pro residues or the sequence PPG is present in a protein, possibly by augmenting the peptidyl transferase activity of the ribosome. Modification of Lys-34 is required for alleviation. The chain is Elongation factor P from Pectobacterium atrosepticum (strain SCRI 1043 / ATCC BAA-672) (Erwinia carotovora subsp. atroseptica).